The following is a 213-amino-acid chain: Probable nicotinate-nucleotide adenylyltransferase (213 aa).

The protein belongs to the NadD family.

The enzyme catalyses nicotinate beta-D-ribonucleotide + ATP + H(+) = deamido-NAD(+) + diphosphate. It participates in cofactor biosynthesis; NAD(+) biosynthesis; deamido-NAD(+) from nicotinate D-ribonucleotide: step 1/1. Its function is as follows. Catalyzes the reversible adenylation of nicotinate mononucleotide (NaMN) to nicotinic acid adenine dinucleotide (NaAD). In Citrobacter koseri (strain ATCC BAA-895 / CDC 4225-83 / SGSC4696), this protein is Probable nicotinate-nucleotide adenylyltransferase.